A 258-amino-acid chain; its full sequence is Snake venom serine protease catroxase-2 (258 aa).

Residues 1–18 (MVLIRVLANLLILQLSYA) form the signal peptide. Residues 19-24 (QKSSEL) constitute a propeptide that is removed on maturation. The Peptidase S1 domain maps to 25-249 (VVGGDECNIN…YNDWIQSIIA (225 aa)). 6 disulfides stabilise this stretch: Cys-31–Cys-163, Cys-50–Cys-66, Cys-98–Cys-256, Cys-142–Cys-210, Cys-174–Cys-189, and Cys-200–Cys-225. Asn-44 carries an N-linked (GlcNAc...) asparagine glycan. Catalysis depends on charge relay system residues His-65 and Asp-110. Ser-204 functions as the Charge relay system in the catalytic mechanism.

This sequence belongs to the peptidase S1 family. Snake venom subfamily. In terms of assembly, monomer. Expressed by the venom gland.

Its subcellular location is the secreted. In terms of biological role, snake venom serine protease that may act in the hemostasis system of the prey. This is Snake venom serine protease catroxase-2 from Crotalus atrox (Western diamondback rattlesnake).